We begin with the raw amino-acid sequence, 85 residues long: Putative plasmid stability protein y4jJ (85 aa).

Basic and acidic residues predominate over residues 66–78; the sequence is EAEHFNQLRDKTP. The segment at 66 to 85 is disordered; the sequence is EAEHFNQLRDKTPAEPMSFE.

The protein to P.syringae pv tomato plasmid stability protein StbC.

In terms of biological role, involved in plasmid stability. The chain is Putative plasmid stability protein y4jJ from Sinorhizobium fredii (strain NBRC 101917 / NGR234).